The sequence spans 483 residues: Matrix metalloproteinase-20 (483 aa).

An N-terminal signal peptide occupies residues 1 to 22 (MKVLPASGLAVFLIMALKFSTA). The propeptide occupies 23-107 (APSLVAASPR…PRCGVPDVAN (85 aa)). Residues 98 to 105 (PRCGVPDV) carry the Cysteine switch motif. C100 contributes to the Zn(2+) binding site. Positions 164, 165, and 166 each coordinate Ca(2+). 2 residues coordinate Zn(2+): H176 and D178. Positions 183, 184, 186, and 188 each coordinate Ca(2+). H191 is a binding site for Zn(2+). 4 residues coordinate Ca(2+): E197, G198, G200, and D202. H204 is a Zn(2+) binding site. Residues D206 and E209 each contribute to the Ca(2+) site. Residue H226 participates in Zn(2+) binding. E227 is a catalytic residue. The Zn(2+) site is built by H230 and H236. Hemopexin repeat units lie at residues 293–343 (PDLC…FPQL), 344–389 (MSNV…GFPR), 391–439 (VQQI…FSGV), and 440–483 (NGQI…WIGC). A disulfide bond links C296 and C483.

Belongs to the peptidase M10A family. Requires Zn(2+) as cofactor. Ca(2+) serves as cofactor. Autoactivates at least at the 107-Asn-|-Tyr-108 site. In terms of tissue distribution, expressed specifically in the enamel organ.

It localises to the secreted. The protein localises to the extracellular space. Its subcellular location is the extracellular matrix. Its function is as follows. Degrades amelogenin, the major protein component of the enamel matrix and two of the macromolecules characterizing the cartilage extracellular matrix: aggrecan and the cartilage oligomeric matrix protein (COMP). May play a central role in tooth enamel formation. Cleaves aggrecan at the '360-Asn-|-Phe-361' site. The sequence is that of Matrix metalloproteinase-20 (MMP20) from Homo sapiens (Human).